A 161-amino-acid chain; its full sequence is ATP synthase subunit b 1 (161 aa).

Residues 3–23 form a helical membrane-spanning segment; sequence LDATFYALVGLILFFVLIAYL.

Belongs to the ATPase B chain family. As to quaternary structure, F-type ATPases have 2 components, F(1) - the catalytic core - and F(0) - the membrane proton channel. F(1) has five subunits: alpha(3), beta(3), gamma(1), delta(1), epsilon(1). F(0) has three main subunits: a(1), b(2) and c(10-14). The alpha and beta chains form an alternating ring which encloses part of the gamma chain. F(1) is attached to F(0) by a central stalk formed by the gamma and epsilon chains, while a peripheral stalk is formed by the delta and b chains.

Its subcellular location is the cell inner membrane. In terms of biological role, f(1)F(0) ATP synthase produces ATP from ADP in the presence of a proton or sodium gradient. F-type ATPases consist of two structural domains, F(1) containing the extramembraneous catalytic core and F(0) containing the membrane proton channel, linked together by a central stalk and a peripheral stalk. During catalysis, ATP synthesis in the catalytic domain of F(1) is coupled via a rotary mechanism of the central stalk subunits to proton translocation. Component of the F(0) channel, it forms part of the peripheral stalk, linking F(1) to F(0). In Rhizobium meliloti (strain 1021) (Ensifer meliloti), this protein is ATP synthase subunit b 1.